Consider the following 662-residue polypeptide: ATP-dependent zinc metalloprotease FtsH (662 aa).

A compositionally biased stretch (basic and acidic residues) spans 1–15; the sequence is MSENPVKRPGKDGSR. The segment at 1 to 35 is disordered; that stretch reads MSENPVKRPGKDGSRNKFKPVQEEGGTPGWFRSKG. The Cytoplasmic portion of the chain corresponds to 1–39; sequence MSENPVKRPGKDGSRNKFKPVQEEGGTPGWFRSKGESPQ. A helical transmembrane segment spans residues 40–60; sequence GKFPGFLLFLMAGLLMLFVFL. The Periplasmic segment spans residues 61–154; sequence RFFSGTDAPE…LKVEKGSSDL (94 aa). A helical transmembrane segment spans residues 155-175; that stretch reads NTFLALFAPWIIFAALYFFLF. Topologically, residues 176 to 662 are cytoplasmic; it reads RRMSGQNGAQ…QGALPNPVTA (487 aa). 250 to 257 provides a ligand contact to ATP; the sequence is GPPGTGKT. His-472 contributes to the Zn(2+) binding site. Residue Glu-473 is part of the active site. His-476 and Asp-548 together coordinate Zn(2+).

The protein in the central section; belongs to the AAA ATPase family. In the C-terminal section; belongs to the peptidase M41 family. Homohexamer. It depends on Zn(2+) as a cofactor.

It localises to the cell inner membrane. Acts as a processive, ATP-dependent zinc metallopeptidase for both cytoplasmic and membrane proteins. Plays a role in the quality control of integral membrane proteins. This chain is ATP-dependent zinc metalloprotease FtsH, found in Pelodictyon phaeoclathratiforme (strain DSM 5477 / BU-1).